The chain runs to 474 residues: Probable CAAX prenyl protease 1 (474 aa).

Helical transmembrane passes span S103 to Y123, I196 to V216, and F230 to P250. A Zn(2+)-binding site is contributed by H332. E333 is an active-site residue. H336 serves as a coordination point for Zn(2+). Transmembrane regions (helical) follow at residues I344 to I364 and V381 to F401. E411 contributes to the Zn(2+) binding site. D415 (proton donor) is an active-site residue.

The protein belongs to the peptidase M48A family. The cofactor is Zn(2+).

It is found in the endoplasmic reticulum membrane. It carries out the reaction Hydrolyzes the peptide bond -P2-(S-farnesyl or geranylgeranyl)C-P1'-P2'-P3'-COOH where P1' and P2' are amino acids with aliphatic side chains and P3' is any C-terminal residue.. Its function is as follows. Proteolytically removes the C-terminal three residues of farnesylated proteins. The sequence is that of Probable CAAX prenyl protease 1 from Schizosaccharomyces pombe (strain 972 / ATCC 24843) (Fission yeast).